Here is a 314-residue protein sequence, read N- to C-terminus: Olfactory receptor 5P76 (314 aa).

The Extracellular segment spans residues 1–28; that stretch reads MAFLEDGNHTAVTGFILLGLTDDPVLRV. Asn8 carries N-linked (GlcNAc...) asparagine glycosylation. The chain crosses the membrane as a helical span at residues 29–49; sequence VLFVIILCIYLVTVSGNLSTI. Over 50–57 the chain is Cytoplasmic; it reads LLIRVSSQ. A helical membrane pass occupies residues 58–78; the sequence is LHHPMYFFLSHLASADIGYSS. At 79–102 the chain is on the extracellular side; sequence SVTPNMLVNFLVERNTISYLGCGI. An intrachain disulfide couples Cys100 to Cys192. Residues 103–123 traverse the membrane as a helical segment; sequence QLGSAVFFGTVECFLLAAMAY. Residues 124–136 lie on the Cytoplasmic side of the membrane; the sequence is DRFIAICSPLLYS. The chain crosses the membrane as a helical span at residues 137-157; that stretch reads NKMSTQVCVQLLVGSYIGGFL. Residues 158 to 199 lie on the Extracellular side of the membrane; it reads NASSFTLSFFSLVFCGPNRVNHFFCDFAPLVKLSCSDVSVPA. Residues 200–220 form a helical membrane-spanning segment; the sequence is VVPSFTAGSIIIVTIFVIAVS. At 221 to 240 the chain is on the cytoplasmic side; sequence YIYILITILKMRSTEGRQKA. The chain crosses the membrane as a helical span at residues 241–261; that stretch reads FSTCTSHLTAVTLFYGTITFI. Residues 262–274 are Extracellular-facing; it reads YVMPKSSYSTDQN. The chain crosses the membrane as a helical span at residues 275–295; the sequence is KVVSVFYMVVVPMLNPLIYSL. Over 296-314 the chain is Cytoplasmic; sequence RNKEIKGALKRQLAKNTFS.

Belongs to the G-protein coupled receptor 1 family.

Its subcellular location is the cell membrane. Its function is as follows. Potential odorant receptor. The polypeptide is Olfactory receptor 5P76 (Mus musculus (Mouse)).